A 1469-amino-acid chain; its full sequence is MYSSSNSFLGGANSARPGQQPPFMQQQQQPSYSQFPPGQQQQPQPTGFAPQPTGYAQPQLSSFGSQLQPQPTGFPSGQLQPQFTGFPGAAPQQSQQPQPTGFQPQQPQFTGYPPQSQPPQLQVPAATGLPLRPAQTSSEIANSFRDASGAAPPPPPKSSGSKIPNIRLSFITAQDQAKFEQLFKSAVGDSQTMSGDKARELLLRSRLSGSDLSKIWVLSDSTKSGQLFFPEFALAMYLCNLRLTGRDLPDALPETIKNEVSSMVDIISFQVPDTQPEPVVRTNVPNFDAPLMENKLAPPAPQQPQPQQPTNSQLLNQLTAQPTGFLSQPTGLSPNQAPFGQQSNLAPQPTGLPGQPQQQSLQPQPTGFMSNPQPTGYSGPRPPVPPIPTGYASNLSPSQTGGMSGLVAQPTGIPGQWGFVNAPSSGLPNIEALKQQLMPQPGREGGFSTAGLAGNASIPWAITKEEKKIYDDLFRAWDGFRKGFIGGDTAIEIMGQSGLNRQDLERIWTLADPNNRGRLNMDEFAVAMHLIYRKLNGYPVPNRLPPELIPPSTRNLNDSIGTIKSLLSQDAESRKATGAFLQPQKTGVSYLKEHSFRGGAVSPGVGRKDATLFKNDDQAAAGYRSSARRRVGNNGRTPSPAASSQASEDELSVEQLKKKIRETQIMLDAVDFQDETRAEEDDALDRRDRREAESLMDRIRRVQDEIDTHPNAAFRNLDNGAERRSLRRQLQAYEDQVPQVASEVRRVEREIAEARLELFRLKDAKAHPNSALNIVGTGPGGTVTEADRIKARARARMQARAAELAGRPAPATQDDEGAAARRLESESANVKADREKNDAMTRDVEDSVKDFARSLEDSLKDVSENSTREHEKRRWEDALGVEDVIRDFIYDLKRNSRTAHIRKEEASRASPSQSQQSRYDEPPAVRPSPPPSTGSTGSLPGTTHEDRVAAAKERAQKRIAERLAAAGLKPHSEASETLVQRQEREKREREERLKRAEEEDALREQERQRRLAEERGTPAQPSTKPIGKKPPPAPPSRRARTDSADQSEAKKAADEAAKVEQTAREQAIREEQQVQEEETKRLEDEARQREEEFMKEKEAQEARLRALQEQVQQGKIKKQEEKRRKEEAERRAKEQEAKLAAQRAELEAAKERERQLQRELEAMEEESSSDDEGPEFATPRNGSPAQTEAPTAEAPPPPPPAPATAPPVPAIAEPEAPTSPATSPASSRANLSPEAESKNPWFKKIGQPADSQPAPVPQAATTPSDTHSTNPFHRLAQQQESTAPAFTGSAPLERKTRARPEDDDDWSAAGSEFDSSDDEDDRAGGGSAKQLASILFGTMAPPRPLSAMDDKSPSKTPTPVQETPAPAPEADAAPSAPVAAPPPPPPPPVPAAAPNGSAGAPPPPPPPPAPPMAPPPPPAGVPPPPAPPAAPAGAADRGALLASIQAGKGLRKVQTNDRSTSSTAGRVLD.

Positions 1 to 163 (MYSSSNSFLG…PPPKSSGSKI (163 aa)) are disordered. Residues 17–52 (PGQQPPFMQQQQQPSYSQFPPGQQQQPQPTGFAPQP) are compositionally biased toward low complexity. Residues 54 to 83 (GYAQPQLSSFGSQLQPQPTGFPSGQLQPQF) show a composition bias toward polar residues. The span at 85 to 124 (GFPGAAPQQSQQPQPTGFQPQQPQFTGYPPQSQPPQLQVP) shows a compositional bias: low complexity. In terms of domain architecture, EH 1 spans 175 to 263 (DQAKFEQLFK…ETIKNEVSSM (89 aa)). The EF-hand 1 domain maps to 207-242 (LSGSDLSKIWVLSDSTKSGQLFFPEFALAMYLCNLR). 2 disordered regions span residues 276 to 311 (PEPVVRTNVPNFDAPLMENKLAPPAPQQPQPQQPTN) and 323 to 409 (TGFL…LVAQ). Residues 298–307 (PPAPQQPQPQ) show a composition bias toward pro residues. Polar residues predominate over residues 323-346 (TGFLSQPTGLSPNQAPFGQQSNLA). Residues 347-366 (PQPTGLPGQPQQQSLQPQPT) are compositionally biased toward low complexity. Positions 391–401 (YASNLSPSQTG) are enriched in polar residues. The EH 2 domain maps to 466-555 (EKKIYDDLFR…PELIPPSTRN (90 aa)). Residues 499-534 (LNRQDLERIWTLADPNNRGRLNMDEFAVAMHLIYRK) enclose the EF-hand 2 domain. 3 disordered regions span residues 619–650 (AAAGYRSSARRRVGNNGRTPSPAASSQASEDE), 801–845 (AAEL…RDVE), and 898–1469 (TAHI…RVLD). Residues 634–646 (NGRTPSPAASSQA) show a composition bias toward polar residues. Positions 641–767 (AASSQASEDE…LFRLKDAKAH (127 aa)) form a coiled coil. Basic and acidic residues predominate over residues 818-845 (AAARRLESESANVKADREKNDAMTRDVE). Composition is skewed to low complexity over residues 908–917 (RASPSQSQQS) and 933–942 (TGSTGSLPGT). Composition is skewed to basic and acidic residues over residues 943-961 (THEDRVAAAKERAQKRIAE), 981-1016 (RQEREKREREERLKRAEEEDALREQERQRRLAEERG), 1039-1106 (ARTD…RLRA), 1117-1137 (KKQEEKRRKEEAERRAKEQEA), and 1144-1161 (AELEAAKERERQLQRELE). Positions 973–1172 (EASETLVQRQ…MEEESSSDDE (200 aa)) form a coiled coil. The span at 1162–1174 (AMEEESSSDDEGP) shows a compositional bias: acidic residues. A compositionally biased stretch (pro residues) spans 1193–1209 (EAPPPPPPAPATAPPVP). Residues 1210–1227 (AIAEPEAPTSPATSPASS) are compositionally biased toward low complexity. The span at 1264-1284 (SDTHSTNPFHRLAQQQESTAP) shows a compositional bias: polar residues. The segment covering 1368 to 1378 (PEADAAPSAPV) has biased composition (low complexity). Pro residues-rich tracts occupy residues 1379–1391 (AAPPPPPPPPVPA) and 1400–1430 (APPPPPPPPAPPMAPPPPPAGVPPPPAPPAA). In terms of domain architecture, WH2 spans 1436–1453 (DRGALLASIQAGKGLRKV). A compositionally biased stretch (polar residues) spans 1456–1469 (NDRSTSSTAGRVLD).

This sequence belongs to the PAN1 family. In terms of assembly, component of the PAN1 actin cytoskeleton-regulatory complex.

The protein localises to the cell membrane. The protein resides in the endosome membrane. Its subcellular location is the cytoplasm. It is found in the cytoskeleton. It localises to the actin patch. Component of the PAN1 actin cytoskeleton-regulatory complex required for the internalization of endosomes during actin-coupled endocytosis. The complex links the site of endocytosis to the cell membrane-associated actin cytoskeleton. Mediates uptake of external molecules and vacuolar degradation of plasma membrane proteins. Plays a role in the proper organization of the cell membrane-associated actin cytoskeleton and promotes its destabilization. The polypeptide is Actin cytoskeleton-regulatory complex protein pan1 (pan1) (Aspergillus terreus (strain NIH 2624 / FGSC A1156)).